A 142-amino-acid chain; its full sequence is Universal stress protein G (142 aa).

The protein belongs to the universal stress protein A family.

The chain is Universal stress protein G (uspG) from Salmonella typhi.